A 263-amino-acid polypeptide reads, in one-letter code: Hydroxyethylthiazole kinase 1 (263 aa).

Substrate is bound at residue M42. Residues K118 and T164 each coordinate ATP. Residue G191 coordinates substrate.

Belongs to the Thz kinase family. Requires Mg(2+) as cofactor.

The catalysed reaction is 5-(2-hydroxyethyl)-4-methylthiazole + ATP = 4-methyl-5-(2-phosphooxyethyl)-thiazole + ADP + H(+). It functions in the pathway cofactor biosynthesis; thiamine diphosphate biosynthesis; 4-methyl-5-(2-phosphoethyl)-thiazole from 5-(2-hydroxyethyl)-4-methylthiazole: step 1/1. Functionally, catalyzes the phosphorylation of the hydroxyl group of 4-methyl-5-beta-hydroxyethylthiazole (THZ). This is Hydroxyethylthiazole kinase 1 from Clostridium botulinum (strain ATCC 19397 / Type A).